Here is a 79-residue protein sequence, read N- to C-terminus: Large ribosomal subunit protein uL24 (79 aa).

The protein belongs to the universal ribosomal protein uL24 family. In terms of assembly, part of the 50S ribosomal subunit.

Functionally, one of two assembly initiator proteins, it binds directly to the 5'-end of the 23S rRNA, where it nucleates assembly of the 50S subunit. One of the proteins that surrounds the polypeptide exit tunnel on the outside of the subunit. The chain is Large ribosomal subunit protein uL24 from Lactobacillus johnsonii (strain CNCM I-12250 / La1 / NCC 533).